The sequence spans 498 residues: Beta-1,3-glucosyltransferase (498 aa).

At 1-6 (MRPPAC) the chain is on the cytoplasmic side. Residues 7–27 (WWLLAPPALLALLTCSLAFGL) form a helical; Signal-anchor for type II membrane protein membrane-spanning segment. Over 28–498 (ASEDTKKEVK…ETQKGFREEL (471 aa)) the chain is Lumenal. N336 carries an N-linked (GlcNAc...) asparagine glycan. A Prevents secretion from ER motif is present at residues 495–498 (REEL).

Belongs to the glycosyltransferase 31 family. In terms of tissue distribution, widely expressed, with highest levels in testis and uterus.

It is found in the endoplasmic reticulum membrane. It participates in protein modification; protein glycosylation. In terms of biological role, O-glucosyltransferase that transfers glucose toward fucose with a beta-1,3 linkage. Specifically glucosylates O-linked fucosylglycan on TSP type-1 domains of proteins, thereby contributing to elongation of O-fucosylglycan. The protein is Beta-1,3-glucosyltransferase of Homo sapiens (Human).